Consider the following 385-residue polypeptide: Prepilin peptidase EppA (385 aa).

The next 10 membrane-spanning stretches (helical) occupy residues 1 to 21 (MILM…CFYA), 29 to 49 (GIIP…LNGA), 58 to 78 (WIFI…YILW), 80 to 100 (MVAW…LLPF), 104 to 124 (LVSY…PFPL), 126 to 146 (VIIN…FFII), 166 to 186 (TSMV…LITD), 187 to 207 (FLPF…TMVI), 231 to 251 (FELT…IQLI), and 358 to 378 (PAIF…MILF).

This sequence belongs to the peptidase A24 family.

Its subcellular location is the cell membrane. Peptidase that processes the N-terminus of prepilins. The polypeptide is Prepilin peptidase EppA (Methanothermobacter thermautotrophicus (strain ATCC 29096 / DSM 1053 / JCM 10044 / NBRC 100330 / Delta H) (Methanobacterium thermoautotrophicum)).